We begin with the raw amino-acid sequence, 258 residues long: TLC domain-containing protein 4-A (258 aa).

6 consecutive transmembrane segments (helical) span residues 5 to 25 (LISY…FSAI), 52 to 72 (FVST…LAYD), 85 to 105 (FWVK…LLLL), 116 to 132 (YMVC…GYVL), 171 to 191 (PVLL…IAVI), and 212 to 232 (IGPQ…NVFW). The 203-residue stretch at 43-245 (GKQCEWDSRF…IARGFYKVVK (203 aa)) folds into the TLC domain.

This sequence belongs to the TLCD4 family.

The protein localises to the membrane. In Xenopus laevis (African clawed frog), this protein is TLC domain-containing protein 4-A (tlcd4-a).